The chain runs to 1001 residues: Open rectifier potassium channel protein 1 (1001 aa).

Topologically, residues 1–6 are cytoplasmic; sequence MSPNRW. A helical membrane pass occupies residues 7-27; the sequence is ILLLIFYISYLMFGAAIYYHI. Residue Asn-58 is glycosylated (N-linked (GlcNAc...) asparagine). The segment at residues 95–111 is an intramembrane region (pore-forming); sequence AFFFAFTVCSTVGYGNI. The chain crosses the membrane as a helical span at residues 120 to 140; it reads MIMIAYSVIGIPVNGILFAGL. Over 141-170 the chain is Cytoplasmic; sequence GEYFGRTFEAIYRRYKKYKMSTDMHYVPPQ. Residues 171 to 191 traverse the membrane as a helical segment; it reads LGLITTVVIALIPGIALFLLL. Positions 208–224 form an intramembrane region, pore-forming; it reads LYYSYVTTTTIGFGDYV. The helical transmembrane segment at 244-264 threads the bilayer; sequence IFVIVWFIFSLGYLVMIMTFI. Topologically, residues 265-1001 are cytoplasmic; sequence TRGLQSKKLA…TGSSGAPAEK (737 aa). Residues Ser-332, Ser-373, Ser-562, and Ser-565 each carry the phosphoserine modification. The tract at residues 591–668 is disordered; sequence SQSYLRNGRG…QAPSARRGSM (78 aa). Ser-685, Ser-691, and Ser-715 each carry phosphoserine. 2 disordered regions span residues 768–795 and 830–1001; these read GGAAGGGGISRGSRKQRKMGNAGLEPPQ and SPTG…PAEK. The span at 832–841 shows a compositional bias: low complexity; sequence TGGAATAPAA. Residues 855 to 873 show a composition bias toward polar residues; sequence AANQSQITAGPSNAPTVQS. Residues 911–926 are compositionally biased toward low complexity; the sequence is RRLSLRPSPLARELSP. Positions 961-983 are enriched in polar residues; it reads RPSTSSTHSPLSRIVQISQAQRK. Over residues 984–1001 the composition is skewed to low complexity; the sequence is SSMPSAAATGSSGAPAEK.

The protein belongs to the two pore domain potassium channel (TC 1.A.1.8) family. In terms of tissue distribution, widespread expression in adult, strongest expression in muscle, brain and ovary. Also present at low levels in larva and embryo.

Its subcellular location is the membrane. Background potassium channel. Rectification is dependent on external potassium concentration. Acts as an outwardly rectifying channel but as external potassium levels increase, this is reversed. This Drosophila melanogaster (Fruit fly) protein is Open rectifier potassium channel protein 1 (Ork1).